The following is a 413-amino-acid chain: Phosphoribosylamine--glycine ligase (413 aa).

In terms of domain architecture, ATP-grasp spans 108–310 (KQLMDKYRIP…LMQLIIDLEN (203 aa)). 134–190 (VETCDLPIVIKKDGLAAGKGVIIAFTREDALDGVKKIYQEEKGKVVFESYLEGEEFS) contacts ATP. Mg(2+) is bound by residues Glu-280 and Asn-282.

Belongs to the GARS family. Mg(2+) serves as cofactor. It depends on Mn(2+) as a cofactor.

The enzyme catalyses 5-phospho-beta-D-ribosylamine + glycine + ATP = N(1)-(5-phospho-beta-D-ribosyl)glycinamide + ADP + phosphate + H(+). Its pathway is purine metabolism; IMP biosynthesis via de novo pathway; N(1)-(5-phospho-D-ribosyl)glycinamide from 5-phospho-alpha-D-ribose 1-diphosphate: step 2/2. The protein is Phosphoribosylamine--glycine ligase of Staphylococcus epidermidis (strain ATCC 12228 / FDA PCI 1200).